A 353-amino-acid chain; its full sequence is Quinolinate synthase (353 aa).

Iminosuccinate-binding residues include histidine 49 and serine 70. Cysteine 115 serves as a coordination point for [4Fe-4S] cluster. Iminosuccinate-binding positions include 141–143 (YAN) and serine 158. Cysteine 202 is a [4Fe-4S] cluster binding site. Iminosuccinate contacts are provided by residues 228 to 230 (HPE) and threonine 245. Cysteine 299 is a binding site for [4Fe-4S] cluster.

This sequence belongs to the quinolinate synthase family. Type 1 subfamily. [4Fe-4S] cluster serves as cofactor.

It is found in the cytoplasm. The catalysed reaction is iminosuccinate + dihydroxyacetone phosphate = quinolinate + phosphate + 2 H2O + H(+). The protein operates within cofactor biosynthesis; NAD(+) biosynthesis; quinolinate from iminoaspartate: step 1/1. In terms of biological role, catalyzes the condensation of iminoaspartate with dihydroxyacetone phosphate to form quinolinate. The chain is Quinolinate synthase from Hahella chejuensis (strain KCTC 2396).